We begin with the raw amino-acid sequence, 314 residues long: tRNA uridine(34) hydroxylase (314 aa).

The 95-residue stretch at 140–234 folds into the Rhodanese domain; it reads SRDDVILVDT…YLEETPAEES (95 aa). Cysteine 194 acts as the Cysteine persulfide intermediate in catalysis.

This sequence belongs to the TrhO family.

The catalysed reaction is uridine(34) in tRNA + AH2 + O2 = 5-hydroxyuridine(34) in tRNA + A + H2O. Its function is as follows. Catalyzes oxygen-dependent 5-hydroxyuridine (ho5U) modification at position 34 in tRNAs. The sequence is that of tRNA uridine(34) hydroxylase from Acinetobacter baylyi (strain ATCC 33305 / BD413 / ADP1).